A 970-amino-acid chain; its full sequence is Serine/threonine-protein kinase PLK4 (970 aa).

A Protein kinase domain is found at 12–265; the sequence is FKVGNLLGKG…LSSVLDHPFM (254 aa). ATP contacts are provided by residues 18–26 and K41; that span reads LGKGSFAGV. Residues K45 and K46 each carry the N6-acetyllysine modification. Residue D136 is the Proton acceptor of the active site. Disordered stretches follow at residues 323 to 458 and 497 to 538; these read TVFP…NHLC and SISP…HSVK. The span at 328–356 shows a compositional bias: polar residues; the sequence is NKSSTDFSSSGDGNSFYTQWGNQETSNSG. Residues 360–369 show a composition bias toward basic and acidic residues; it reads VIQDAEERPH. The span at 379–393 shows a compositional bias: polar residues; the sequence is SDRSGTSNSQSQAKT. A Phosphoserine modification is found at S401. Positions 438 to 454 are enriched in polar residues; it reads SSSSGSFERPDNNQALS. Positions 504 to 515 are enriched in basic and acidic residues; sequence FQGHPDLQKDTS. The region spanning 586 to 699 is the Cryptic POLO box 1 (CPB1) domain; sequence TLRSITSPLV…SRFVQLVRSK (114 aa). A Phosphoserine modification is found at S665. Residues 700-813 form the Cryptic POLO box 2 (CPB2) domain; sequence SPKITYFTRY…GRKPGSTSSP (114 aa). The interval 808–828 is disordered; it reads GSTSSPKALSPPPSVDSNYPT. S817 is subject to Phosphoserine. The region spanning 886-964 is the POLO box domain; that stretch reads QLLKSVFVKN…LSSILLMFSN (79 aa).

The protein belongs to the protein kinase superfamily. Ser/Thr protein kinase family. CDC5/Polo subfamily. In terms of assembly, homodimer. Interacts with CEP152 (via N-terminus). Interacts with CEP78; this interaction may be important for proper PLK4 localization to the centriole and PLK4-induced overduplication of centrioles. Interacts with CEP131. Interacts simultaneously with TENT5C and CEP192. Interacts with TENT5C; this interaction leads to the TENT5C recruitment in the centrosome. Interacts with CEP85; this interaction may be important in cell migration and centriole assembly. In terms of processing, acetylation by KAT2A and KAT2B impairs kinase activity by shifting the kinase to an inactive conformation. Post-translationally, ubiquitinated; leading to its degradation by the proteasome. Deubiquitinated by USP54; leading to PLK4 stabilization. Tyrosine-phosphorylated by TEC.

Its subcellular location is the cytoplasm. It localises to the cytoskeleton. The protein localises to the microtubule organizing center. The protein resides in the centrosome. It is found in the centriole. Its subcellular location is the nucleus. It localises to the nucleolus. The protein localises to the cleavage furrow. The enzyme catalyses L-seryl-[protein] + ATP = O-phospho-L-seryl-[protein] + ADP + H(+). It carries out the reaction L-threonyl-[protein] + ATP = O-phospho-L-threonyl-[protein] + ADP + H(+). In terms of biological role, serine/threonine-protein kinase that plays a central role in centriole duplication. Able to trigger procentriole formation on the surface of the parental centriole cylinder, leading to the recruitment of centriole biogenesis proteins such as SASS6, CPAP, CCP110, CEP135 and gamma-tubulin. When overexpressed, it is able to induce centrosome amplification through the simultaneous generation of multiple procentrioles adjoining each parental centriole during S phase. Phosphorylates 'Ser-151' of FBXW5 during the G1/S transition, leading to inhibit FBXW5 ability to ubiquitinate SASS6. Its central role in centriole replication suggests a possible role in tumorigenesis, centrosome aberrations being frequently observed in tumors. Also involved in deuterosome-mediated centriole amplification in multiciliated that can generate more than 100 centrioles. Also involved in trophoblast differentiation by phosphorylating HAND1, leading to disrupt the interaction between HAND1 and MDFIC and activate HAND1. Phosphorylates CDC25C and CHEK2. Required for the recruitment of STIL to the centriole and for STIL-mediated centriole amplification. Phosphorylates CEP131 at 'Ser-78' and PCM1 at 'Ser-372' which is essential for proper organization and integrity of centriolar satellites. This chain is Serine/threonine-protein kinase PLK4, found in Homo sapiens (Human).